The primary structure comprises 108 residues: UPF0102 protein WS0451 (108 aa).

The protein belongs to the UPF0102 family.

The protein is UPF0102 protein WS0451 of Wolinella succinogenes (strain ATCC 29543 / DSM 1740 / CCUG 13145 / JCM 31913 / LMG 7466 / NCTC 11488 / FDC 602W) (Vibrio succinogenes).